The primary structure comprises 421 residues: ATP-dependent RNA helicase RhlB (421 aa).

The short motif at 9-37 is the Q motif element; that stretch reads QKFSDFALHPQVVEALEKKGFYNCTPIQA. The 180-residue stretch at 40–219 folds into the Helicase ATP-binding domain; the sequence is LPLTLAGRDV…FEQMNNAEYV (180 aa). An ATP-binding site is contributed by 53–60; that stretch reads AQTGTGKT. The DEAD box signature appears at 165-168; it reads DEAD. In terms of domain architecture, Helicase C-terminal spans 245–390; sequence RLLQTLIEEE…VSKYNPEALM (146 aa). The interval 396–421 is disordered; that stretch reads PLRLTRSRPGNGPRRAGAPRNRRRSG. Low complexity predominate over residues 402-414; it reads SRPGNGPRRAGAP.

It belongs to the DEAD box helicase family. RhlB subfamily. In terms of assembly, component of the RNA degradosome, which is a multiprotein complex involved in RNA processing and mRNA degradation.

The protein resides in the cytoplasm. The catalysed reaction is ATP + H2O = ADP + phosphate + H(+). Its function is as follows. DEAD-box RNA helicase involved in RNA degradation. Has RNA-dependent ATPase activity and unwinds double-stranded RNA. In Salmonella arizonae (strain ATCC BAA-731 / CDC346-86 / RSK2980), this protein is ATP-dependent RNA helicase RhlB.